Here is a 148-residue protein sequence, read N- to C-terminus: RING finger protein 24 (148 aa).

Residues 24 to 44 (IYIVVFGTAIFVFILSLLFCC) traverse the membrane as a helical segment. The segment at 78-119 (CAVCLEDFKPRDELGICPCKHAFHRKCLIKWLEVRKVCPLCN) adopts an RING-type zinc-finger fold.

In terms of assembly, interacts with TRPC1, TRPC3, TRPC4, TRPC5, TRPC6 and TRPC7.

It is found in the golgi apparatus membrane. Functionally, may play a role in TRPCs intracellular trafficking. This is RING finger protein 24 (RNF24) from Homo sapiens (Human).